Consider the following 311-residue polypeptide: Heme A synthase (311 aa).

Residues 1-6 are Cytoplasmic-facing; it reads MQRFIK. Residues 7–27 form a helical membrane-spanning segment; it reads WLAVITSLDLLIVLLGGALVT. Residues 28 to 62 lie on the Extracellular side of the membrane; the sequence is KTGSGQGCGKSWPLCNGEFVPSNLSMETIIELSHR. A disulfide bond links C35 and C42. The active site involves E58. A heme o-binding site is contributed by H61. The helical transmembrane segment at 63–83 threads the bilayer; that stretch reads LTSGSAGILVTLLCILSWKYY. The Cytoplasmic segment spans residues 84 to 91; the sequence is KHVRETKT. Residues 92 to 112 form a helical membrane-spanning segment; that stretch reads LAILSFVFLVAQALMGAAAVV. Topologically, residues 113-121 are extracellular; the sequence is WGQMPAVLA. Residues 122-142 form a helical membrane-spanning segment; the sequence is IHFGISLISFASVILLTCLIF. Position 123 (H123) interacts with heme o. Topologically, residues 143–159 are cytoplasmic; that stretch reads EIDQKFDARSLIMDKKM. Residues 160-180 form a helical membrane-spanning segment; that stretch reads KFHIYGVTIYSYIVVYTGALV. Residues 181-211 lie on the Extracellular side of the membrane; the sequence is RHERASLACPDFPLCSKNRPMPTQLHEWVQM. C189 and C195 are joined by a disulfide. A helical membrane pass occupies residues 212-232; the sequence is GHRVAAMLIFAWILYAMILAI. H213 is a heme b binding site. Residues 233–243 lie on the Cytoplasmic side of the membrane; it reads RHYKQQPVVYW. A helical transmembrane segment spans residues 244–264; the sequence is GWIISFILVTLQAIVGILVVF. Residues 265–271 are Extracellular-facing; the sequence is TNASLSM. The chain crosses the membrane as a helical span at residues 272–292; sequence ALLHSLFISCLFAVLCYLVML. Position 275 (H275) interacts with heme b. Residues 293–311 are Cytoplasmic-facing; that stretch reads GTRSKVNAKEAASTSKQTK.

This sequence belongs to the COX15/CtaA family. Type 1 subfamily. As to quaternary structure, interacts with CtaB. Requires heme b as cofactor.

It is found in the cell membrane. It catalyses the reaction Fe(II)-heme o + 2 A + H2O = Fe(II)-heme a + 2 AH2. It functions in the pathway porphyrin-containing compound metabolism; heme A biosynthesis; heme A from heme O: step 1/1. Its function is as follows. Catalyzes the conversion of heme O to heme A by two successive hydroxylations of the methyl group at C8. The first hydroxylation forms heme I, the second hydroxylation results in an unstable dihydroxymethyl group, which spontaneously dehydrates, resulting in the formyl group of heme A. This chain is Heme A synthase, found in Bacillus cereus (strain ATCC 10987 / NRS 248).